Here is a 441-residue protein sequence, read N- to C-terminus: Leucine-rich repeat-containing protein 17 (441 aa).

An N-terminal signal peptide occupies residues 1-18 (MRVVTIVILLCFCKAAEL). LRR repeat units lie at residues 82–103 (DLLHMLLARNKIRTLKNNMFSK), 106–127 (KLKSLDLQQNEISKIESEAFFG), and 130–151 (KLTTLLLQHNQIKVLTEEVFIY). One can recognise an LRRCT 1 domain in the interval 163 to 214 (NPWHCTCEIETLISMLQIPRNRNLGNYAKCESPQEQKNKKLRQIKSEQLCNE). Positions 225–268 (QVSGRPPVIKPEVDSTFCHNYVFPIQTLDCKRKELKKVPNNIPP) constitute an LRRNT domain. 3 LRR repeats span residues 269 to 290 (DIVKLDLSYNKINQLRPKEFED), 293 to 314 (ELKKLNLSSNGIEFIDPAAFLG), and 317 to 340 (HLEELDLSNNSLQNFDYGVLEDLY). The 53-residue stretch at 350-402 (NPWRCDYNIHYLYYWLKHHYNVHFNGLECKTPEEYKGWSVGKYIRSYYEECPK) folds into the LRRCT 2 domain.

Expressed in osteoblast cell lines. Well expressed in ovary, heart, pancreas, skeletal muscle, lung, and fetal kidney and lung and only at the basal levels in the other tissues examined including adult kidney. More expressed in S-type neuroblastoma cells than in N-type neuroblastoma cells.

The protein resides in the secreted. Its subcellular location is the extracellular space. Functionally, involved in bone homeostasis. Acts as a negative regulator of RANKL-induced osteoclast precursor differentiation from bone marrow precursors. This Homo sapiens (Human) protein is Leucine-rich repeat-containing protein 17 (LRRC17).